The following is a 152-amino-acid chain: Ubiquitin-conjugating enzyme E2 W (152 aa).

M1 is covalently cross-linked (Peptide (Met-Gly) (interchain with G-Cter in ubiquitin)). A UBC core domain is found at 4-152 (AATRRLMKEL…TRWWFHDDSV (149 aa)). C92 acts as the Glycyl thioester intermediate in catalysis.

It belongs to the ubiquitin-conjugating enzyme family.

It catalyses the reaction S-ubiquitinyl-[E1 ubiquitin-activating enzyme]-L-cysteine + [E2 ubiquitin-conjugating enzyme]-L-cysteine = [E1 ubiquitin-activating enzyme]-L-cysteine + S-ubiquitinyl-[E2 ubiquitin-conjugating enzyme]-L-cysteine.. It carries out the reaction S-ubiquitinyl-[E1 ubiquitin-activating enzyme]-L-cysteine + [acceptor protein]-N-terminal-amino acid = [E1 ubiquitin-activating enzyme]-L-cysteine + N-terminal-ubiquitinyl-[acceptor protein].. It participates in protein modification; protein ubiquitination. Functionally, accepts ubiquitin from the E1 complex and catalyzes its covalent attachment to other proteins. Together with ubc-18, required for the ubiquitination of membranous organelles, and the removal of paternal mitochondria from early embryos. The chain is Ubiquitin-conjugating enzyme E2 W from Caenorhabditis elegans.